A 201-amino-acid polypeptide reads, in one-letter code: Probable molybdenum cofactor guanylyltransferase (201 aa).

Residues 6–8 (LAG), K18, D67, and D92 each bind GTP. D92 contacts Mg(2+).

The protein belongs to the MobA family. Mg(2+) is required as a cofactor.

It localises to the cytoplasm. The catalysed reaction is Mo-molybdopterin + GTP + H(+) = Mo-molybdopterin guanine dinucleotide + diphosphate. Its function is as follows. Transfers a GMP moiety from GTP to Mo-molybdopterin (Mo-MPT) cofactor (Moco or molybdenum cofactor) to form Mo-molybdopterin guanine dinucleotide (Mo-MGD) cofactor. The sequence is that of Probable molybdenum cofactor guanylyltransferase from Thermococcus kodakarensis (strain ATCC BAA-918 / JCM 12380 / KOD1) (Pyrococcus kodakaraensis (strain KOD1)).